A 448-amino-acid chain; its full sequence is Nicotinate phosphoribosyltransferase pncB1 (448 aa).

The interval 1–21 is disordered; that stretch reads MGPPPAARRREGEPDNQDPAG. His-212 is modified (phosphohistidine). Positions 353-372 are disordered; sequence RSSYKESPGGRKEALRRSRA.

Belongs to the NAPRTase family. Transiently phosphorylated on a His residue during the reaction cycle. Phosphorylation strongly increases the affinity for substrates and increases the rate of nicotinate D-ribonucleotide production. Dephosphorylation regenerates the low-affinity form of the enzyme, leading to product release.

It carries out the reaction nicotinate + 5-phospho-alpha-D-ribose 1-diphosphate + ATP + H2O = nicotinate beta-D-ribonucleotide + ADP + phosphate + diphosphate. It participates in cofactor biosynthesis; NAD(+) biosynthesis; nicotinate D-ribonucleotide from nicotinate: step 1/1. Involved in the Preiss-Handler pathway, which is a recycling route that permits the salvage of free nicotinamide (NM) and nicotinic acid (Na) involved in the NAD biosynthesis. Catalyzes the synthesis of beta-nicotinate D-ribonucleotide from nicotinate and 5-phospho-D-ribose 1-phosphate at the expense of ATP. It is not able to use nicotinamide. PncB1 contributes to basal NAD level. This is Nicotinate phosphoribosyltransferase pncB1 (pncB1) from Mycobacterium tuberculosis (strain CDC 1551 / Oshkosh).